Reading from the N-terminus, the 294-residue chain is 1D-myo-inositol 2-acetamido-2-deoxy-alpha-D-glucopyranoside deacetylase (294 aa).

Histidine 13, aspartate 16, and histidine 148 together coordinate Zn(2+).

Belongs to the MshB deacetylase family. Zn(2+) serves as cofactor.

It catalyses the reaction 1D-myo-inositol 2-acetamido-2-deoxy-alpha-D-glucopyranoside + H2O = 1D-myo-inositol 2-amino-2-deoxy-alpha-D-glucopyranoside + acetate. Catalyzes the deacetylation of 1D-myo-inositol 2-acetamido-2-deoxy-alpha-D-glucopyranoside (GlcNAc-Ins) in the mycothiol biosynthesis pathway. The sequence is that of 1D-myo-inositol 2-acetamido-2-deoxy-alpha-D-glucopyranoside deacetylase from Geodermatophilus obscurus (strain ATCC 25078 / DSM 43160 / JCM 3152 / CCUG 61914 / KCC A-0152 / KCTC 9177 / NBRC 13315 / NRRL B-3577 / G-20).